The primary structure comprises 577 residues: Laccase-25 (577 aa).

Residues 1–22 (MTLHWSLLLFIAIALVSSVAQA) form the signal peptide. 2 Plastocyanin-like domains span residues 30-147 (NVGN…PRGG) and 158-313 (KEHV…YAGA). N-linked (GlcNAc...) asparagine glycosylation is present at N33. Residues H81 and H83 each coordinate Cu cation. N109 carries N-linked (GlcNAc...) asparagine glycosylation. 2 residues coordinate Cu cation: H126 and H128. N-linked (GlcNAc...) asparagine glycosylation is found at N169, N203, N208, N218, N332, N383, N396, N404, N441, and N459. The Plastocyanin-like 3 domain maps to 423–560 (DFPDTPPVVF…AMVLEVLDGP (138 aa)). Cu cation contacts are provided by H477, H480, H482, H539, C540, H541, and H545.

It belongs to the multicopper oxidase family. The cofactor is Cu cation.

The protein localises to the secreted. Its subcellular location is the extracellular space. It is found in the apoplast. It carries out the reaction 4 hydroquinone + O2 = 4 benzosemiquinone + 2 H2O. Lignin degradation and detoxification of lignin-derived products. The protein is Laccase-25 (LAC25) of Oryza sativa subsp. japonica (Rice).